A 379-amino-acid chain; its full sequence is MKHLSIFGSTGSIGQQTLKIVRSLPHLFNVVALASYGNNKDLFIEQIREFSPSIVSVYDEQLYFEIRKEFPEIQAFLREEGLMAAATAEEIDMVVAASSGVVALPAIIEAMKSGKVLALANKEVLVSAGEIIKEFAKQYQTEIFPVDSEHNALYQCLEGRNALEVKKLLLTASGGPLLHKTKEELAHVTVQDVLKHPIWHMGAKITVDSSTLVNKGLEIIEAYWLFGLENAEIDAVIHPQSLIHGMVEFLDGTVLSVMNPPNMLFPIQHVLTTPKRYPAPHKGINFSIKQTLEFFPIDEERFPSIGLARQVLKNKGSSGPFFNAANEVLVQRFLAEEIAWCDILDKLTRLMENYRVFACTSLEDVLAVDEEARALAQEI.

NADPH contacts are provided by Thr10, Gly11, Ser12, Ile13, Asn39, and Asn121. A 1-deoxy-D-xylulose 5-phosphate-binding site is contributed by Lys122. Glu123 serves as a coordination point for NADPH. Asp147 serves as a coordination point for Mn(2+). Positions 148, 149, 173, and 196 each coordinate 1-deoxy-D-xylulose 5-phosphate. Glu149 serves as a coordination point for Mn(2+). An NADPH-binding site is contributed by Gly202. 4 residues coordinate 1-deoxy-D-xylulose 5-phosphate: Ser209, Asn214, Lys215, and Glu218. Glu218 contributes to the Mn(2+) binding site.

It belongs to the DXR family. Requires Mg(2+) as cofactor. The cofactor is Mn(2+).

It catalyses the reaction 2-C-methyl-D-erythritol 4-phosphate + NADP(+) = 1-deoxy-D-xylulose 5-phosphate + NADPH + H(+). The protein operates within isoprenoid biosynthesis; isopentenyl diphosphate biosynthesis via DXP pathway; isopentenyl diphosphate from 1-deoxy-D-xylulose 5-phosphate: step 1/6. Its function is as follows. Catalyzes the NADPH-dependent rearrangement and reduction of 1-deoxy-D-xylulose-5-phosphate (DXP) to 2-C-methyl-D-erythritol 4-phosphate (MEP). This Chlamydia felis (strain Fe/C-56) (Chlamydophila felis) protein is 1-deoxy-D-xylulose 5-phosphate reductoisomerase.